The chain runs to 158 residues: Small ribosomal subunit protein bS6 (158 aa).

The disordered stretch occupies residues 98 to 158; it reads EAPSAPLARR…DRDEDQNEEN (61 aa). Composition is skewed to basic and acidic residues over residues 106–117 and 127–150; these read RRGEDRDRDRGF and DSGRRRGADDREEYRARDEYRSDR.

The protein belongs to the bacterial ribosomal protein bS6 family.

Functionally, binds together with bS18 to 16S ribosomal RNA. The sequence is that of Small ribosomal subunit protein bS6 from Acidiphilium cryptum (strain JF-5).